We begin with the raw amino-acid sequence, 32 residues long: U3-cyrtautoxin-As1a (32 aa).

Intrachain disulfides connect Cys-4/Cys-19, Cys-11/Cys-24, and Cys-18/Cys-29.

It belongs to the neurotoxin 14 (magi-1) family. To aptotoxin III. As to expression, expressed by the venom gland.

It is found in the secreted. Functionally, is both paralytic and lethal, when injected into lepidopteran larvae. Is a slower acting toxin, being lethal at 24 hours, but not paralytic at 1 hour post-injection. The polypeptide is U3-cyrtautoxin-As1a (Apomastus schlingeri (Trap-door spider)).